The following is a 30-amino-acid chain: GLPVCGETCFGGTCNTPGCSCDPWPMCSRN.

Residues 1–30 (GLPVCGETCFGGTCNTPGCSCDPWPMCSRN) constitute a cross-link (cyclopeptide (Gly-Asn)). 3 disulfides stabilise this stretch: cysteine 5–cysteine 19, cysteine 9–cysteine 21, and cysteine 14–cysteine 27.

Post-translationally, this is a cyclic peptide.

Its function is as follows. Probably participates in a plant defense mechanism. The protein is Varv peptide B of Viola arvensis (European field pansy).